A 184-amino-acid chain; its full sequence is Ribosome-recycling factor (184 aa).

This sequence belongs to the RRF family.

The protein resides in the cytoplasm. Responsible for the release of ribosomes from messenger RNA at the termination of protein biosynthesis. May increase the efficiency of translation by recycling ribosomes from one round of translation to another. The protein is Ribosome-recycling factor of Borrelia recurrentis (strain A1).